The following is a 711-amino-acid chain: GDNF-inducible zinc finger protein 1 (711 aa).

The BTB domain occupies 31–103 (CDVTVSVEYQ…VYTAKVQVEE (73 aa)). A compositionally biased stretch (low complexity) spans 153–168 (SGSQVSAAPAPRASVA). Disordered regions lie at residues 153–220 (SGSQ…PKIR) and 243–312 (RLRE…EGEK). Composition is skewed to basic and acidic residues over residues 197–212 (PPKK…KEVV), 243–252 (RLREQQKTAE), and 265–277 (SPDR…EQVS). The segment covering 298 to 309 (EEEEEEEEEDEE) has biased composition (acidic residues). 10 C2H2-type zinc fingers span residues 317-340 (FKCS…KHRH), 348-371 (YRCD…RHVH), 377-400 (FPCE…LQVH), 407-429 (HRCG…ERTH), 435-457 (YGCT…MRIH), 463-485 (FVCD…KRCH), 491-513 (FMCE…NRIH), 519-541 (FKCE…IKVH), 547-569 (YCCD…RRIH), and 575-597 (FMCN…TSIH). Serine 613 carries the post-translational modification Phosphoserine.

This sequence belongs to the krueppel C2H2-type zinc-finger protein family. Interacts with NCL. Expressed in adult brain, heart, skeletal muscle, kidney and liver. Also detected in fetal brain and kidney, and at lower levels in fetal lung and liver.

The protein resides in the cytoplasm. It is found in the nucleus. It localises to the nucleoplasm. The protein localises to the nucleolus. Its function is as follows. Transcriptional repressor that binds the GZF1 responsive element (GRE) (consensus: 5'-TGCGCN[TG][CA]TATA-3'). May be regulating VSX2/HOX10 expression. In Homo sapiens (Human), this protein is GDNF-inducible zinc finger protein 1.